Reading from the N-terminus, the 370-residue chain is Aminomethyltransferase (370 aa).

The protein belongs to the GcvT family. As to quaternary structure, the glycine cleavage system is composed of four proteins: P, T, L and H.

The catalysed reaction is N(6)-[(R)-S(8)-aminomethyldihydrolipoyl]-L-lysyl-[protein] + (6S)-5,6,7,8-tetrahydrofolate = N(6)-[(R)-dihydrolipoyl]-L-lysyl-[protein] + (6R)-5,10-methylene-5,6,7,8-tetrahydrofolate + NH4(+). Its function is as follows. The glycine cleavage system catalyzes the degradation of glycine. This is Aminomethyltransferase from Stenotrophomonas maltophilia (strain R551-3).